Consider the following 438-residue polypeptide: Adenylosuccinate synthetase (438 aa).

Residues 13-19 (GDEGKGK) and 41-43 (GHT) contribute to the GTP site. The Proton acceptor role is filled by D14. Mg(2+)-binding residues include D14 and G41. Residues 14-17 (DEGK), 39-42 (NAGH), T130, R144, Q225, T240, and R310 contribute to the IMP site. Catalysis depends on H42, which acts as the Proton donor. 306 to 312 (ATTGRLR) provides a ligand contact to substrate. GTP-binding positions include R312, 338-340 (KLD), and 421-423 (STG).

It belongs to the adenylosuccinate synthetase family. In terms of assembly, homodimer. It depends on Mg(2+) as a cofactor.

The protein localises to the cytoplasm. It catalyses the reaction IMP + L-aspartate + GTP = N(6)-(1,2-dicarboxyethyl)-AMP + GDP + phosphate + 2 H(+). Its pathway is purine metabolism; AMP biosynthesis via de novo pathway; AMP from IMP: step 1/2. In terms of biological role, plays an important role in the de novo pathway of purine nucleotide biosynthesis. Catalyzes the first committed step in the biosynthesis of AMP from IMP. The protein is Adenylosuccinate synthetase of Vibrio parahaemolyticus serotype O3:K6 (strain RIMD 2210633).